We begin with the raw amino-acid sequence, 464 residues long: Phosphoglucosamine mutase (464 aa).

The active-site Phosphoserine intermediate is the S112. The Mg(2+) site is built by S112, D252, D254, and D256. S112 carries the phosphoserine modification.

This sequence belongs to the phosphohexose mutase family. Mg(2+) is required as a cofactor. Activated by phosphorylation.

It catalyses the reaction alpha-D-glucosamine 1-phosphate = D-glucosamine 6-phosphate. Its function is as follows. Catalyzes the conversion of glucosamine-6-phosphate to glucosamine-1-phosphate. The sequence is that of Phosphoglucosamine mutase from Synechococcus sp. (strain CC9902).